The sequence spans 114 residues: Large ribosomal subunit protein bL19 (114 aa).

The protein belongs to the bacterial ribosomal protein bL19 family.

This protein is located at the 30S-50S ribosomal subunit interface and may play a role in the structure and function of the aminoacyl-tRNA binding site. The chain is Large ribosomal subunit protein bL19 (rplS) from Listeria innocua serovar 6a (strain ATCC BAA-680 / CLIP 11262).